The following is a 199-amino-acid chain: ATP-dependent Clp protease proteolytic subunit (199 aa).

Residue serine 97 is the Nucleophile of the active site. Histidine 122 is an active-site residue.

The protein belongs to the peptidase S14 family. In terms of assembly, fourteen ClpP subunits assemble into 2 heptameric rings which stack back to back to give a disk-like structure with a central cavity, resembling the structure of eukaryotic proteasomes.

It localises to the cytoplasm. It carries out the reaction Hydrolysis of proteins to small peptides in the presence of ATP and magnesium. alpha-casein is the usual test substrate. In the absence of ATP, only oligopeptides shorter than five residues are hydrolyzed (such as succinyl-Leu-Tyr-|-NHMec, and Leu-Tyr-Leu-|-Tyr-Trp, in which cleavage of the -Tyr-|-Leu- and -Tyr-|-Trp bonds also occurs).. Functionally, cleaves peptides in various proteins in a process that requires ATP hydrolysis. Has a chymotrypsin-like activity. Plays a major role in the degradation of misfolded proteins. The polypeptide is ATP-dependent Clp protease proteolytic subunit (Citrifermentans bemidjiense (strain ATCC BAA-1014 / DSM 16622 / JCM 12645 / Bem) (Geobacter bemidjiensis)).